We begin with the raw amino-acid sequence, 78 residues long: MKLTCVVIVAVLLLTACQLLTADDSRGTQKHRSLRSTTKVSKATDCIEAGNYCGPTVMKICCGFCSPFSKICMNYPQN.

Residues 1 to 22 form the signal peptide; sequence MKLTCVVIVAVLLLTACQLLTA. The propeptide occupies 23-42; the sequence is DDSRGTQKHRSLRSTTKVSK. Cystine bridges form between cysteine 46-cysteine 62, cysteine 53-cysteine 65, and cysteine 61-cysteine 72. 4-hydroxyproline occurs at positions 55 and 67.

This sequence belongs to the conotoxin O1 superfamily. Expressed by the venom duct.

The protein resides in the secreted. Omega-conotoxins act at presynaptic membranes, they bind and block voltage-gated calcium channels (Cav). The sequence is that of Omega-conotoxin-like Ac6.5 from Conus achatinus (Little frog cone).